We begin with the raw amino-acid sequence, 137 residues long: uncharacterized protein (137 aa).

In terms of domain architecture, Sm spans 30–105; sequence SLLCVFTALR…IRFIQIPDKI (76 aa).

This is an uncharacterized protein from Dictyostelium discoideum (Social amoeba).